Reading from the N-terminus, the 422-residue chain is Phthiocerol/phthiodiolone dimycocerosyl transferase (422 aa).

The active-site Proton acceptor is H124.

It belongs to the acyltransferase PapA5 family. Monomer. Interacts directly with the acyl carrier protein (ACP) domain of the mycocerosic acid synthase (mas) protein.

It catalyses the reaction 2 a mycocerosyl-[mycocerosic acid synthase] + a phthiocerol = a dimycocerosyl phthiocerol + 2 holo-[mycocerosic acid synthase].. The catalysed reaction is 2 a mycocerosyl-[mycocerosic acid synthase] + a phthiodiolone = a dimycocerosyl phthiodiolone + 2 holo-[mycocerosic acid synthase].. It carries out the reaction 2 a mycocerosyl-[mycocerosic acid synthase] + a phenolphthiocerol = a dimycocerosyl phenolphthiocerol + 2 holo-[mycocerosic acid synthase].. In terms of biological role, catalyzes diesterification of phthiocerol, phthiodiolone, and phenolphthiocerol with mycocerosic acids, the final step in the phthiocerol, phthiodiolone and phenolphthiocerol dimycocerosate esters (PDIM) synthesis. Can directly transfer the mycocerosate bound to the mycocerosic acid synthase (mas) onto the substrate alcohols. The protein is Phthiocerol/phthiodiolone dimycocerosyl transferase (papA5) of Mycobacterium tuberculosis (strain ATCC 25177 / H37Ra).